The primary structure comprises 143 residues: Large ribosomal subunit protein uL13 (143 aa).

It belongs to the universal ribosomal protein uL13 family. In terms of assembly, part of the 50S ribosomal subunit.

Its function is as follows. This protein is one of the early assembly proteins of the 50S ribosomal subunit, although it is not seen to bind rRNA by itself. It is important during the early stages of 50S assembly. The sequence is that of Large ribosomal subunit protein uL13 from Symbiobacterium thermophilum (strain DSM 24528 / JCM 14929 / IAM 14863 / T).